We begin with the raw amino-acid sequence, 363 residues long: MQPQVLLSSLLPLSDYISGWSWGSLLGNQPCPPLPAGDLVMRKYQMYPENFMWDKKRCVAYVSNLYNATLSIYDPYKSEVIDTISFPGLSHPGDSATPNPLHTSGLILRPDAATADLLEIVVDNGDCFFSNGNNVSGPDYLLTMDLRTKKVISQIRLNDISNGTYAGYADAELASDGNSYVVGTYVSNILRVTPQSEVSTFFVQEPLGPPREYGYTGLAHVGNVLLSNDNIAKQLVRFDIRDEKGTPVFIPQTPYHEFTTSNVMNLPEKYNNTILLAAENVTPDHPSGGVAVWRSRDQLYNEVEYLGFIPSRLTNALATAARQMSDRIYVVSVYTDGANITVAGYSSEFVLQDITVEVDALVA.

Belongs to the TRI14 family.

Functionally, part of the gene cluster that mediates the production of the antimicrobial trichothecene harzianum A (HA) that plays a role in Botrytis cinerea antagonistic activity and plant defense priming. The biosynthesis of harzianum A begins with the cyclization of farnesyl diphosphate to trichodiene and is catalyzed by the trichodiene synthase TRI5. Trichodiene undergoes a series of oxygenations catalyzed by the cytochrome P450 monooxygenase TRI4. TRI4 controls the addition of 3 oxygens at C-2, C-11, and the C-12, C-13-epoxide to form the intermediate isotrichodiol. Isotrichodiol then undergoes a non-enzymatic isomerization and cyclization to form 12,13-epoxytrichothec-9-ene (EPT) which is further converted to trichodermol by the cytochrome P450 monooxygenase TRI11 via C-4 hydroxylation. The last step of HA synthesis is esterification of an octatriendioyl moiety to the C-4 oxygen of trichodermol. The octatriendioyl moiety is probably produced by the polyketide synthase TRI17 and the esterification performed by the trichothecene O-acetyltransferase TRI3. The protein is Trichothecene biosynthesis protein 14 of Trichoderma arundinaceum.